Reading from the N-terminus, the 260-residue chain is Acetylglutamate kinase (260 aa).

Residues 45-46, Arg-67, and Asn-159 contribute to the substrate site; that span reads GG.

Belongs to the acetylglutamate kinase family. ArgB subfamily.

The protein localises to the cytoplasm. The enzyme catalyses N-acetyl-L-glutamate + ATP = N-acetyl-L-glutamyl 5-phosphate + ADP. It participates in amino-acid biosynthesis; L-arginine biosynthesis; N(2)-acetyl-L-ornithine from L-glutamate: step 2/4. In terms of biological role, catalyzes the ATP-dependent phosphorylation of N-acetyl-L-glutamate. This is Acetylglutamate kinase from Aliivibrio fischeri (strain ATCC 700601 / ES114) (Vibrio fischeri).